The chain runs to 412 residues: Multidrug resistance protein MdtG (412 aa).

11 helical membrane-spanning segments follow: residues 19–39 (LGCF…PLYV), 56–76 (LVFS…GGLA), 90–110 (LGMS…QFLL), 113–133 (ALLG…ATQI), 144–164 (TLST…GFLA), 171–191 (TVFF…LFLI), 222–242 (LFVT…ILTL), 254–274 (IAFI…MSAP), 288–308 (ILIV…FVQT), 317–337 (FLLG…LVYN), and 376–396 (AVFL…TLSL).

Belongs to the major facilitator superfamily. DHA1 family. MdtG (TC 2.A.1.2.20) subfamily.

The protein resides in the cell inner membrane. The chain is Multidrug resistance protein MdtG from Klebsiella pneumoniae (strain 342).